Here is a 419-residue protein sequence, read N- to C-terminus: Serine hydroxymethyltransferase (419 aa).

(6S)-5,6,7,8-tetrahydrofolate-binding positions include L121 and 125-127; that span reads GHL. K230 carries the N6-(pyridoxal phosphate)lysine modification. 355–357 provides a ligand contact to (6S)-5,6,7,8-tetrahydrofolate; it reads SPF.

This sequence belongs to the SHMT family. In terms of assembly, homodimer. Requires pyridoxal 5'-phosphate as cofactor.

It localises to the cytoplasm. The catalysed reaction is (6R)-5,10-methylene-5,6,7,8-tetrahydrofolate + glycine + H2O = (6S)-5,6,7,8-tetrahydrofolate + L-serine. It participates in one-carbon metabolism; tetrahydrofolate interconversion. It functions in the pathway amino-acid biosynthesis; glycine biosynthesis; glycine from L-serine: step 1/1. Its function is as follows. Catalyzes the reversible interconversion of serine and glycine with tetrahydrofolate (THF) serving as the one-carbon carrier. This reaction serves as the major source of one-carbon groups required for the biosynthesis of purines, thymidylate, methionine, and other important biomolecules. Also exhibits THF-independent aldolase activity toward beta-hydroxyamino acids, producing glycine and aldehydes, via a retro-aldol mechanism. The polypeptide is Serine hydroxymethyltransferase (Alkalilimnicola ehrlichii (strain ATCC BAA-1101 / DSM 17681 / MLHE-1)).